Reading from the N-terminus, the 138-residue chain is Translation initiation factor 5A (138 aa).

Lys-42 is subject to Hypusine.

It belongs to the eIF-5A family.

The protein localises to the cytoplasm. Functionally, functions by promoting the formation of the first peptide bond. This is Translation initiation factor 5A (eif5a) from Pyrobaculum aerophilum (strain ATCC 51768 / DSM 7523 / JCM 9630 / CIP 104966 / NBRC 100827 / IM2).